A 22-amino-acid chain; its full sequence is Mu-conotoxin SxIIIC (22 aa).

3 disulfides stabilise this stretch: C3/C15, C4/C21, and C10/C22. At C22 the chain carries Cysteine amide.

Belongs to the conotoxin M superfamily. In terms of tissue distribution, expressed by the venom duct.

The protein localises to the secreted. Mu-conotoxins block voltage-gated sodium channels (Nav). This toxin potently inhibits hNav1.4/SCN4A (IC(50)=15.11 nM). It also displays lower activities on other human subtypes (Nav1.1/SCN1A; IC(50)=132 nM, Nav1.2/SCN2A; IC(50)=363.8, Nav1.3/SCN3A; IC(50)=89.4, Nav1.6/SCN3A; IC(50)=124.9, Nav1.7/SCN7A; IC(50)=152.2). At Nav1.7/SCN9A, it does not elicit change in channel voltage-dependence of fast inactivation or activation, suggesting it acts as a pore blocker. Interestingly, it blocks current inhibition in an irreversible manner (tested during 35 minutes). The chain is Mu-conotoxin SxIIIC from Conus striolatus (Cone snail).